We begin with the raw amino-acid sequence, 533 residues long: Probable nucleolar protein 5-1 (533 aa).

The region spanning 280-398 (IAPNLTALVG…LEARLRTLEG (119 aa)) is the Nop domain. The tract at residues 402–533 (GRLSGSAKGK…EKKKKKKTEV (132 aa)) is disordered. Over residues 412–423 (PKIEVYDKDKKK) the composition is skewed to basic and acidic residues. Over residues 433–450 (KTYNTAADSLLQTPTVDS) the composition is skewed to polar residues. Composition is skewed to basic and acidic residues over residues 474–489 (TEEP…KTEA) and 515–524 (MPAKKKEKSE).

It belongs to the NOP5/NOP56 family.

The protein resides in the nucleus. Its subcellular location is the nucleolus. Required for 60S ribosomal subunit biogenesis. The chain is Probable nucleolar protein 5-1 (NOP5-1) from Arabidopsis thaliana (Mouse-ear cress).